Here is a 480-residue protein sequence, read N- to C-terminus: Chromosomal replication initiator protein DnaA (480 aa).

The segment at 1-73 is domain I, interacts with DnaA modulators; it reads MNQDFWPFCL…GELGEEFHGQ (73 aa). Positions 73 to 143 are domain II; sequence QPIQLELQLP…SANELAYDKT (71 aa). Residues 144-360 are domain III, AAA+ region; that stretch reads RLNADFTFDT…GALNKVVAYA (217 aa). ATP is bound by residues Gly-188, Gly-190, Lys-191, and Thr-192. Residues 361–480 are domain IV, binds dsDNA; sequence RFHGRGISLE…VHVLTQVLRG (120 aa).

Belongs to the DnaA family. In terms of assembly, oligomerizes as a right-handed, spiral filament on DNA at oriC.

The protein localises to the cytoplasm. In terms of biological role, plays an essential role in the initiation and regulation of chromosomal replication. ATP-DnaA binds to the origin of replication (oriC) to initiate formation of the DNA replication initiation complex once per cell cycle. Binds the DnaA box (a 9 base pair repeat at the origin) and separates the double-stranded (ds)DNA. Forms a right-handed helical filament on oriC DNA; dsDNA binds to the exterior of the filament while single-stranded (ss)DNA is stabiized in the filament's interior. The ATP-DnaA-oriC complex binds and stabilizes one strand of the AT-rich DNA unwinding element (DUE), permitting loading of DNA polymerase. After initiation quickly degrades to an ADP-DnaA complex that is not apt for DNA replication. Binds acidic phospholipids. This chain is Chromosomal replication initiator protein DnaA, found in Azoarcus sp. (strain BH72).